The chain runs to 666 residues: tRNA 5-methylaminomethyl-2-thiouridine biosynthesis bifunctional protein MnmC (666 aa).

The tRNA (mnm(5)s(2)U34)-methyltransferase stretch occupies residues 1-245 (MKQYAIQPAT…KREMLCGVME (245 aa)). The segment at 270-666 (IGGGIASALL…RKLLKGKAVK (397 aa)) is FAD-dependent cmnm(5)s(2)U34 oxidoreductase.

In the N-terminal section; belongs to the methyltransferase superfamily. tRNA (mnm(5)s(2)U34)-methyltransferase family. It in the C-terminal section; belongs to the DAO family. Requires FAD as cofactor.

The protein localises to the cytoplasm. The enzyme catalyses 5-aminomethyl-2-thiouridine(34) in tRNA + S-adenosyl-L-methionine = 5-methylaminomethyl-2-thiouridine(34) in tRNA + S-adenosyl-L-homocysteine + H(+). Catalyzes the last two steps in the biosynthesis of 5-methylaminomethyl-2-thiouridine (mnm(5)s(2)U) at the wobble position (U34) in tRNA. Catalyzes the FAD-dependent demodification of cmnm(5)s(2)U34 to nm(5)s(2)U34, followed by the transfer of a methyl group from S-adenosyl-L-methionine to nm(5)s(2)U34, to form mnm(5)s(2)U34. The polypeptide is tRNA 5-methylaminomethyl-2-thiouridine biosynthesis bifunctional protein MnmC (Salmonella choleraesuis (strain SC-B67)).